The chain runs to 660 residues: DNA mismatch repair protein MutL (660 aa).

Residues 414–433 (SSVKHASRPQNTFTETDHPN) are disordered.

The protein belongs to the DNA mismatch repair MutL/HexB family.

Its function is as follows. This protein is involved in the repair of mismatches in DNA. It is required for dam-dependent methyl-directed DNA mismatch repair. May act as a 'molecular matchmaker', a protein that promotes the formation of a stable complex between two or more DNA-binding proteins in an ATP-dependent manner without itself being part of a final effector complex. The sequence is that of DNA mismatch repair protein MutL from Streptococcus pyogenes serotype M6 (strain ATCC BAA-946 / MGAS10394).